A 348-amino-acid chain; its full sequence is Alpha-2-HS-glycoprotein (348 aa).

The N-terminal stretch at 1–18 (MKTLVLLLCFTLLWGCQS) is a signal peptide. The 115-residue stretch at 19–133 (APQGTGLGFR…QFSVMHTKCH (115 aa)) folds into the Cystatin fetuin-A-type 1 domain. 6 disulfide bridges follow: Cys-32-Cys-339, Cys-89-Cys-100, Cys-114-Cys-132, Cys-146-Cys-149, Cys-208-Cys-219, and Cys-230-Cys-247. A glycan (N-linked (GlcNAc...) asparagine) is linked at Asn-99. Ser-134 and Ser-138 each carry phosphoserine. The 112-residue stretch at 144 to 255 (KVCPHCALLT…TCTAFPTQAN (112 aa)) folds into the Cystatin fetuin-A-type 2 domain. N-linked (GlcNAc...) asparagine glycans are attached at residues Asn-156 and Asn-176. Residues Ser-307, Ser-311, Ser-314, and Ser-316 each carry the phosphoserine modification.

It belongs to the fetuin family. In terms of processing, phosphorylated by FAM20C in the extracellular medium. As to expression, expressed by the liver and secreted in plasma.

The protein localises to the secreted. The sequence is that of Alpha-2-HS-glycoprotein (AHSG) from Meriones unguiculatus (Mongolian jird).